The following is a 321-amino-acid chain: Transaldolase (321 aa).

The active-site Schiff-base intermediate with substrate is Lys-132.

The protein belongs to the transaldolase family. Type 1 subfamily. Homodimer.

Its subcellular location is the cytoplasm. The enzyme catalyses D-sedoheptulose 7-phosphate + D-glyceraldehyde 3-phosphate = D-erythrose 4-phosphate + beta-D-fructose 6-phosphate. Its pathway is carbohydrate degradation; pentose phosphate pathway; D-glyceraldehyde 3-phosphate and beta-D-fructose 6-phosphate from D-ribose 5-phosphate and D-xylulose 5-phosphate (non-oxidative stage): step 2/3. In terms of biological role, transaldolase is important for the balance of metabolites in the pentose-phosphate pathway. The chain is Transaldolase from Rhizobium etli (strain ATCC 51251 / DSM 11541 / JCM 21823 / NBRC 15573 / CFN 42).